The following is a 409-amino-acid chain: Peptidase T (409 aa).

Residue H78 coordinates Zn(2+). D80 is a catalytic residue. D140 is a binding site for Zn(2+). The active-site Proton acceptor is the E174. Zn(2+)-binding residues include E175, D197, and H379.

Belongs to the peptidase M20B family. It depends on Zn(2+) as a cofactor.

It localises to the cytoplasm. The enzyme catalyses Release of the N-terminal residue from a tripeptide.. Its function is as follows. Cleaves the N-terminal amino acid of tripeptides. This Photobacterium profundum (strain SS9) protein is Peptidase T.